The following is a 213-amino-acid chain: High frequency lysogenization protein HflD homolog (213 aa).

Residues 79–122 (QGLNAELTRYTLSLMVLERKLSSAKGALNTLGDRINGLQRQLDH) are a coiled coil.

The protein belongs to the HflD family.

It is found in the cytoplasm. The protein localises to the cell inner membrane. The sequence is that of High frequency lysogenization protein HflD homolog from Salmonella typhi.